Here is a 354-residue protein sequence, read N- to C-terminus: 3'-5' exonuclease (354 aa).

The interval 1–120 (MERFLTKMPI…PSPEKEKPEK (120 aa)) is disordered. Basic and acidic residues-rich tracts occupy residues 13–30 (KANE…ETPK) and 37–50 (KKDT…KENA). The span at 59–70 (TKGRPGRPAAKR) shows a compositional bias: basic residues. Residues 71-91 (KNLDTPDVKDEKIAMEEENPP) are compositionally biased toward basic and acidic residues. Phosphoserine occurs at positions 104, 110, and 112. Positions 149-314 (WVEKQKDDVV…GQVIYRELER (166 aa)) constitute a 3'-5' exonuclease domain. Asp163, Glu165, and Asp301 together coordinate Mg(2+).

This sequence belongs to the WRNexo family.

The protein resides in the nucleus. Functionally, has exonuclease activity on both single-stranded and duplex templates bearing overhangs, but not blunt ended duplex DNA, and cleaves in a 3'-5' direction. Essential for the formation of DNA replication focal centers. Has an important role in maintaining genome stability. The chain is 3'-5' exonuclease from Drosophila simulans (Fruit fly).